The following is a 251-amino-acid chain: Pyridoxine 5'-phosphate synthase (251 aa).

Asn7 is a 3-amino-2-oxopropyl phosphate binding site. 9–10 is a binding site for 1-deoxy-D-xylulose 5-phosphate; the sequence is DH. Arg18 lines the 3-amino-2-oxopropyl phosphate pocket. The active-site Proton acceptor is the His43. 2 residues coordinate 1-deoxy-D-xylulose 5-phosphate: Arg45 and His50. The Proton acceptor role is filled by Glu73. Thr103 contacts 1-deoxy-D-xylulose 5-phosphate. The Proton donor role is filled by His197. Residues Gly198 and 219 to 220 each bind 3-amino-2-oxopropyl phosphate; that span reads GH.

This sequence belongs to the PNP synthase family. Homooctamer; tetramer of dimers.

It localises to the cytoplasm. The catalysed reaction is 3-amino-2-oxopropyl phosphate + 1-deoxy-D-xylulose 5-phosphate = pyridoxine 5'-phosphate + phosphate + 2 H2O + H(+). The protein operates within cofactor biosynthesis; pyridoxine 5'-phosphate biosynthesis; pyridoxine 5'-phosphate from D-erythrose 4-phosphate: step 5/5. Functionally, catalyzes the complicated ring closure reaction between the two acyclic compounds 1-deoxy-D-xylulose-5-phosphate (DXP) and 3-amino-2-oxopropyl phosphate (1-amino-acetone-3-phosphate or AAP) to form pyridoxine 5'-phosphate (PNP) and inorganic phosphate. The chain is Pyridoxine 5'-phosphate synthase from Caulobacter sp. (strain K31).